The sequence spans 283 residues: S-methyl-5'-thioadenosine phosphorylase (283 aa).

Residue T18 participates in phosphate binding. K51 bears the N6-acetyllysine mark. Phosphate is bound by residues 60 to 61 (RH) and 93 to 94 (TA). A substrate-binding site is contributed by M196. A phosphate-binding site is contributed by T197. A substrate-binding site is contributed by 220 to 222 (DYD).

The protein belongs to the PNP/MTAP phosphorylase family. MTAP subfamily. As to quaternary structure, homotrimer. In terms of tissue distribution, ubiquitously expressed.

Its subcellular location is the cytoplasm. It is found in the nucleus. The enzyme catalyses S-methyl-5'-thioadenosine + phosphate = 5-(methylsulfanyl)-alpha-D-ribose 1-phosphate + adenine. Its pathway is amino-acid biosynthesis; L-methionine biosynthesis via salvage pathway; S-methyl-5-thio-alpha-D-ribose 1-phosphate from S-methyl-5'-thioadenosine (phosphorylase route): step 1/1. Inhibited by 5'-methylthiotubercin and 5'-chloroformycin. In terms of biological role, catalyzes the reversible phosphorylation of S-methyl-5'-thioadenosine (MTA) to adenine and 5-methylthioribose-1-phosphate. Involved in the breakdown of MTA, a major by-product of polyamine biosynthesis. Responsible for the first step in the methionine salvage pathway after MTA has been generated from S-adenosylmethionine. Has broad substrate specificity with 6-aminopurine nucleosides as preferred substrates. The sequence is that of S-methyl-5'-thioadenosine phosphorylase from Homo sapiens (Human).